The chain runs to 198 residues: Glycerol-3-phosphate acyltransferase (198 aa).

5 consecutive transmembrane segments (helical) span residues 5-25, 56-76, 84-104, 114-134, and 158-178; these read LILL…LWIG, SIVT…PFFF, FWLL…FAGF, AGVI…VFLV, and LFMG…FVIW.

The protein belongs to the PlsY family. As to quaternary structure, probably interacts with PlsX.

It is found in the cell membrane. The enzyme catalyses an acyl phosphate + sn-glycerol 3-phosphate = a 1-acyl-sn-glycero-3-phosphate + phosphate. It participates in lipid metabolism; phospholipid metabolism. Its function is as follows. Catalyzes the transfer of an acyl group from acyl-phosphate (acyl-PO(4)) to glycerol-3-phosphate (G3P) to form lysophosphatidic acid (LPA). This enzyme utilizes acyl-phosphate as fatty acyl donor, but not acyl-CoA or acyl-ACP. This Listeria monocytogenes serotype 4b (strain CLIP80459) protein is Glycerol-3-phosphate acyltransferase.